The sequence spans 99 residues: MNQERVFKVLLGPHVSEKATVLADKKGQFVFKVATDATKLEIKKAVESLFSVQVERVTTLNVLGKSKRTARGLGKRNDWKKAVISLQPGQDLDFSSSAE.

Belongs to the universal ribosomal protein uL23 family. Part of the 50S ribosomal subunit. Contacts protein L29, and trigger factor when it is bound to the ribosome.

Functionally, one of the early assembly proteins it binds 23S rRNA. One of the proteins that surrounds the polypeptide exit tunnel on the outside of the ribosome. Forms the main docking site for trigger factor binding to the ribosome. This chain is Large ribosomal subunit protein uL23, found in Pseudomonas savastanoi pv. phaseolicola (strain 1448A / Race 6) (Pseudomonas syringae pv. phaseolicola (strain 1448A / Race 6)).